The sequence spans 379 residues: Lipid-A-disaccharide synthase (379 aa).

It belongs to the LpxB family.

It carries out the reaction a lipid X + a UDP-2-N,3-O-bis[(3R)-3-hydroxyacyl]-alpha-D-glucosamine = a lipid A disaccharide + UDP + H(+). It participates in bacterial outer membrane biogenesis; LPS lipid A biosynthesis. In terms of biological role, condensation of UDP-2,3-diacylglucosamine and 2,3-diacylglucosamine-1-phosphate to form lipid A disaccharide, a precursor of lipid A, a phosphorylated glycolipid that anchors the lipopolysaccharide to the outer membrane of the cell. This chain is Lipid-A-disaccharide synthase, found in Pseudomonas fluorescens (strain SBW25).